The chain runs to 72 residues: ATP synthase subunit c (72 aa).

2 helical membrane-spanning segments follow: residues 1-21 (MSLG…GAGI) and 49-69 (FIGV…AFIV).

It belongs to the ATPase C chain family. As to quaternary structure, F-type ATPases have 2 components, F(1) - the catalytic core - and F(0) - the membrane proton channel. F(1) has five subunits: alpha(3), beta(3), gamma(1), delta(1), epsilon(1). F(0) has three main subunits: a(1), b(2) and c(10-14). The alpha and beta chains form an alternating ring which encloses part of the gamma chain. F(1) is attached to F(0) by a central stalk formed by the gamma and epsilon chains, while a peripheral stalk is formed by the delta and b chains.

Its subcellular location is the cell membrane. Functionally, f(1)F(0) ATP synthase produces ATP from ADP in the presence of a proton or sodium gradient. F-type ATPases consist of two structural domains, F(1) containing the extramembraneous catalytic core and F(0) containing the membrane proton channel, linked together by a central stalk and a peripheral stalk. During catalysis, ATP synthesis in the catalytic domain of F(1) is coupled via a rotary mechanism of the central stalk subunits to proton translocation. In terms of biological role, key component of the F(0) channel; it plays a direct role in translocation across the membrane. A homomeric c-ring of between 10-14 subunits forms the central stalk rotor element with the F(1) delta and epsilon subunits. This is ATP synthase subunit c from Bacillus cytotoxicus (strain DSM 22905 / CIP 110041 / 391-98 / NVH 391-98).